The primary structure comprises 307 residues: Ribonuclease HII (307 aa).

Residues 44–235 enclose the RNase H type-2 domain; it reads EPVAGVDEAG…VRRAGGRMEL (192 aa). 3 residues coordinate a divalent metal cation: aspartate 50, glutamate 51, and aspartate 144. Residues 241–307 form a disordered region; the sequence is ADSDDSPGFA…SRPAELLEIP (67 aa). Over residues 250–280 the composition is skewed to low complexity; sequence ASGPAEAVPGPAGSAGAASAAARPAAAGPAG. The segment covering 287–296 has biased composition (basic and acidic residues); that stretch reads RAADLRDNGD.

Belongs to the RNase HII family. Mn(2+) is required as a cofactor. It depends on Mg(2+) as a cofactor.

It is found in the cytoplasm. It carries out the reaction Endonucleolytic cleavage to 5'-phosphomonoester.. Its function is as follows. Endonuclease that specifically degrades the RNA of RNA-DNA hybrids. The chain is Ribonuclease HII from Acidothermus cellulolyticus (strain ATCC 43068 / DSM 8971 / 11B).